A 528-amino-acid polypeptide reads, in one-letter code: Protein spinster homolog 1 (528 aa).

The disordered stretch occupies residues 1–38 (MAGSDTAPFLSQADDPDDGPAPGHPGLPGPMGNPKSGE). Ala-2 carries the post-translational modification N-acetylalanine. A run of 12 helical transmembrane segments spans residues 60-80 (LIVVVLCYINLLNYMDRFTVA), 98-118 (GLIQTVFISSYMVLAPVFGYL), 126-146 (YLMCGGIAFWSLVTLGSSFIP), 160-180 (VGVGEASYSTIAPTLIADLFV), 187-207 (MLSIFYFAIPVGSGLGYIAGS), 218-238 (WALRVTPGLGVLAVLLLFLVV), 278-298 (LGFTSVAFVTGSLALWAPAFL), 323-343 (LIFGLITCLTGVLGVGLGVEI), 357-377 (LVCAAGLLGSAPFLFLALACA), 381-401 (IVATYIFIFIGETLLSMNWAI), 421-441 (FQIVLSHLLGDAGSPYLIGLI), and 465-485 (MLCAFVGALGGAAFLGTAMFI). Residue Ser-518 is modified to Phosphoserine.

This sequence belongs to the major facilitator superfamily. Spinster (TC 2.A.1.49) family. In terms of assembly, interacts with BCL2 and BCL2L1. As to expression, expressed in liver (at mRNA and protein levels).

It localises to the lysosome membrane. The enzyme catalyses a 1-acyl-sn-glycero-3-phosphocholine(out) + H(+)(out) = a 1-acyl-sn-glycero-3-phosphocholine(in) + H(+)(in). It catalyses the reaction 1-hexadecanoyl-sn-glycero-3-phosphocholine(out) + H(+)(out) = 1-hexadecanoyl-sn-glycero-3-phosphocholine(in) + H(+)(in). The catalysed reaction is 1-(9Z-octadecenoyl)-sn-glycero-3-phosphocholine(out) + H(+)(out) = 1-(9Z-octadecenoyl)-sn-glycero-3-phosphocholine(in) + H(+)(in). It carries out the reaction 1-(5Z,8Z,11Z,14Z-eicosatetraenoyl)-sn-glycero-3-phosphocholine(out) + H(+)(out) = 1-(5Z,8Z,11Z,14Z-eicosatetraenoyl)-sn-glycero-3-phosphocholine(in) + H(+)(in). The enzyme catalyses 1-(4Z,7Z,10Z,13Z,16Z,19Z-docosahexaenoyl)-sn-glycero-3-phosphocholine(out) + H(+)(out) = 1-(4Z,7Z,10Z,13Z,16Z,19Z-docosahexaenoyl)-sn-glycero-3-phosphocholine(in) + H(+)(in). It catalyses the reaction a 1-acyl-sn-glycero-3-phosphoethanolamine(out) + H(+)(out) = a 1-acyl-sn-glycero-3-phosphoethanolamine(in) + H(+)(in). The catalysed reaction is 1-(9Z-octadecenoyl)-sn-glycero-3-phosphoethanolamine(out) + H(+)(out) = 1-(9Z-octadecenoyl)-sn-glycero-3-phosphoethanolamine(in) + H(+)(in). It carries out the reaction 1-acyl-sn-glycero-3-phospho-(1'-sn-glycerol)(out) + H(+)(out) = 1-acyl-sn-glycero-3-phospho-(1'-sn-glycerol)(in) + H(+)(in). The enzyme catalyses 1-(9Z-octadecenoyl)-sn-glycero-3-phospho-(1'-sn-glycerol)(out) + H(+)(out) = 1-(9Z-octadecenoyl)-sn-glycero-3-phospho-(1'-sn-glycerol)(in) + H(+)(in). It catalyses the reaction a 1-O-(1Z-alkenyl)-sn-glycero-3-phosphocholine(out) + H(+)(out) = a 1-O-(1Z-alkenyl)-sn-glycero-3-phosphocholine(in) + H(+)(in). The catalysed reaction is 1-(1Z-hexadecenyl)-sn-glycero-3-phosphocholine(out) + H(+)(out) = 1-(1Z-hexadecenyl)-sn-glycero-3-phosphocholine(in) + H(+)(in). It carries out the reaction a 1-O-(1Z-alkenyl)-sn-glycero-3-phosphoethanolamine(out) + H(+)(out) = a 1-O-(1Z-alkenyl)-sn-glycero-3-phosphoethanolamine(in) + H(+)(in). The enzyme catalyses 1-O-(1Z-hexadecenyl)-sn-glycero-3-phosphoethanolamine(out) + H(+)(out) = 1-O-(1Z-hexadecenyl)-sn-glycero-3-phosphoethanolamine(in) + H(+)(in). Plays a critical role in the phospholipid salvage pathway from lysosomes to the cytosol. Mediates the rate-limiting, proton-dependent, lysosomal efflux of lysophospholipids, which can then be reacylated by acyltransferases in the endoplasmic reticulum to form phospholipids. Selective for zwitterionic headgroups such as lysophosphatidylcholine (LPC) and lysophosphatidylethanolamine (LPE), can also transport lysophosphatidylglycerol (LPG), but not other anionic lysophospholipids, sphingosine, nor sphingomyelin. Transports lysophospholipids with saturated, monounsaturated, and polyunsaturated fatty acids, such as 1-hexadecanoyl-sn-glycero-3-phosphocholine, 1-(9Z-octadecenoyl)-sn-glycero-3-phosphocholine and 1-(4Z,7Z,10Z,13Z,16Z,19Z-docosahexaenoyl)-sn-glycero-3-phosphocholine, respectively. Can also transport lysoplasmalogen (LPC with a fatty alcohol) such as 1-(1Z-hexadecenyl)-sn-glycero-3-phosphocholine. Essential player in lysosomal homeostasis. Crucial for cell survival under conditions of nutrient limitation. May be involved in necrotic or autophagic cell death. The polypeptide is Protein spinster homolog 1 (Spns1) (Mus musculus (Mouse)).